Reading from the N-terminus, the 560-residue chain is DNA ligase B (560 aa).

Residue lysine 124 is the N6-AMP-lysine intermediate of the active site.

This sequence belongs to the NAD-dependent DNA ligase family. LigB subfamily.

The catalysed reaction is NAD(+) + (deoxyribonucleotide)n-3'-hydroxyl + 5'-phospho-(deoxyribonucleotide)m = (deoxyribonucleotide)n+m + AMP + beta-nicotinamide D-nucleotide.. In terms of biological role, catalyzes the formation of phosphodiester linkages between 5'-phosphoryl and 3'-hydroxyl groups in double-stranded DNA using NAD as a coenzyme and as the energy source for the reaction. This chain is DNA ligase B, found in Escherichia coli O1:K1 / APEC.